The following is a 193-amino-acid chain: Sporulation-specific transcriptional regulator GerR (193 aa).

One can recognise an HTH myb-type domain in the interval 1–61; it reads MTITRQDAWT…RWNSYVRKQY (61 aa). Positions 35 to 57 form a DNA-binding region, H-T-H motif; the sequence is FEEVGRALTRTAAACGFRWNSYV. A coiled-coil region spans residues 122–177; sequence AQEFQLEREKLKEQIQSLQKELEDLRSENQTLRNQLEMTEEDYKALIDIMDRARKM.

Belongs to the RsfA transcriptional regulator family.

Its function is as follows. Transcriptional factor that regulates the expression of several late sporulation genes. Controls genes of both sigma-E and sigma-K regulons, acting alone on some genes and in conjunction with SpoIIID or GerE on others. Regulates, directly or indirectly, the expression of genes encoding coat proteins such as cgeA, cotB, cotC, cotG, cotU and cotY. Controls late sporulation genes in two ways: directly, by binding to the promoter region of genes such as cotB, cotU and spoVIF, and acting directly on their transcription, and indirectly, through the activation of SpoVIF, which stabilizes the transcriptional activator GerE and consequently induces the expression of the GerE-dependent genes, such as cotC and cotG. Its effect is strongly positive on spoVIF, cotC, and cotG, weakly positive on cotB, and negative on cotU. The chain is Sporulation-specific transcriptional regulator GerR from Bacillus subtilis (strain 168).